The primary structure comprises 209 residues: Ribonuclease HII (209 aa).

Residues 5-202 form the RNase H type-2 domain; sequence SMTLGIDEAG…KNRILNPKLL (198 aa). A divalent metal cation is bound by residues Asp11, Glu12, and Asp108.

It belongs to the RNase HII family. Mn(2+) is required as a cofactor. The cofactor is Mg(2+).

It localises to the cytoplasm. The enzyme catalyses Endonucleolytic cleavage to 5'-phosphomonoester.. Its function is as follows. Endonuclease that specifically degrades the RNA of RNA-DNA hybrids. This is Ribonuclease HII (rnhB) from Helicobacter pylori (strain J99 / ATCC 700824) (Campylobacter pylori J99).